The sequence spans 210 residues: Imidazole glycerol phosphate synthase subunit HisH (210 aa).

The region spanning 7 to 210 is the Glutamine amidotransferase type-1 domain; that stretch reads KVVIIDTGCA…SQLIKNFLEM (204 aa). The Nucleophile role is filled by Cys82. Residues His192 and Glu194 contribute to the active site.

In terms of assembly, heterodimer of HisH and HisF.

It localises to the cytoplasm. The catalysed reaction is 5-[(5-phospho-1-deoxy-D-ribulos-1-ylimino)methylamino]-1-(5-phospho-beta-D-ribosyl)imidazole-4-carboxamide + L-glutamine = D-erythro-1-(imidazol-4-yl)glycerol 3-phosphate + 5-amino-1-(5-phospho-beta-D-ribosyl)imidazole-4-carboxamide + L-glutamate + H(+). It catalyses the reaction L-glutamine + H2O = L-glutamate + NH4(+). It functions in the pathway amino-acid biosynthesis; L-histidine biosynthesis; L-histidine from 5-phospho-alpha-D-ribose 1-diphosphate: step 5/9. In terms of biological role, IGPS catalyzes the conversion of PRFAR and glutamine to IGP, AICAR and glutamate. The HisH subunit catalyzes the hydrolysis of glutamine to glutamate and ammonia as part of the synthesis of IGP and AICAR. The resulting ammonia molecule is channeled to the active site of HisF. This Photobacterium profundum (strain SS9) protein is Imidazole glycerol phosphate synthase subunit HisH.